We begin with the raw amino-acid sequence, 93 residues long: Protein ea8.5 (93 aa).

This chain is Protein ea8.5 (ea8.5), found in Escherichia phage lambda (Bacteriophage lambda).